The chain runs to 496 residues: MEIIIISLCLATILAFLLLKPLLNRTVAKDNLPPSPWRVPVIGNLHQLSLHPHRSLRSLSHRYGPLMLLHFGRVPILVVSSSDVAHDLMKTHDLKVANRPRLKVIETILNGGREVVFSPYGDYWRQIKTVCVVHLLNKKMVQSFAKVREEERSVMMEKVEKASSDSSPLNLSKLLITLTSDVASRVSFGKKHSNEASMSDFKNQVRKITELVGGFPVSEYIPCLAWIDQIRGLYNRAEEVSKIFGDLMDKVVQEHLDATNKPTKDFVDILLSFERQSKDGIEVRRSDIKFIILDIFLGGTTTTNSLLEWTMTELIRHPECMKKLQDEIRGDATNLTIYRSHEEVEDMKYLKAVIKEGLRLHPPFPLLVLRLLTQDVKLKGYDIAAGTQVITNAWAIQRDIVTWGIDAEEFRPERHLDSPLDFRGTNFEYIPFGSGRRICPGIGFAMALVEVTLANLVNRFNWRMDARLSGDEYDLAEATGIDVCRKFPLIVFPSNA.

Residues 3 to 23 (IIIISLCLATILAFLLLKPLL) form a helical membrane-spanning segment. A heme-binding site is contributed by Cys-439.

The protein belongs to the cytochrome P450 family. It depends on heme as a cofactor.

Its subcellular location is the membrane. The protein is Cytochrome P450 71A15 (CYP71A15) of Arabidopsis thaliana (Mouse-ear cress).